The chain runs to 704 residues: Meprin A subunit beta (704 aa).

A signal peptide spans 1–20 (MDARHQPWFLVFATFLLVSG). Positions 21–64 (LPAPEKFVKDIDGGIDQDIFDINQGLGLDLFEGDIKLEANGKNS) are excised as a propeptide. Residues 21-654 (LPAPEKFVKD…RCEKRGSTRD (634 aa)) are Extracellular-facing. The Peptidase M12A domain maps to 63-257 (NSIIGDHKRW…LKLNQLYNCT (195 aa)). 3 disulfides stabilise this stretch: Cys104-Cys256, Cys125-Cys145, and Cys266-Cys428. Zn(2+) is bound at residue His153. Glu154 is an active-site residue. The Zn(2+) site is built by His157 and His163. 9 N-linked (GlcNAc...) asparagine glycosylation sites follow: Asn193, Asn219, Asn255, Asn316, Asn422, Asn437, Asn529, Asn548, and Asn593. Residues 261 to 430 (SFMDSCDFEL…INLSETRCPH (170 aa)) form the MAM domain. Positions 431–586 (HIWHIQNFTQ…GDDIYILLTV (156 aa)) constitute an MATH domain. The 41-residue stretch at 607 to 647 (VHNACSEVVCQNGGICVVQDGRAECKCPAGEDWWYMGKRCE) folds into the EGF-like domain. 3 disulfide bridges follow: Cys611-Cys622, Cys616-Cys631, and Cys633-Cys646. The helical transmembrane segment at 655 to 678 (TVIIAVSSTVTVFAVMLIITLVSV) threads the bilayer. Residues 679 to 704 (YCTRRKYRKKARANTAAMTLENQHAF) lie on the Cytoplasmic side of the membrane. Thr697 is modified (phosphothreonine).

As to quaternary structure, homotetramer consisting of disulfide-linked beta subunits, or heterotetramer of two alpha and two beta subunits formed by non-covalent association of two disulfide-linked heterodimers. Interacts with MBL2 through its carbohydrate moiety. This interaction may inhibit its catalytic activity. Interacts with TSPAN8. Zn(2+) serves as cofactor. Post-translationally, proteolytically activated by trypsin in the intestinal lumen and kallikrein-related peptidases in other tissues. In terms of processing, N-glycosylated; contains high mannose and/or complex biantennary structures. Phosphorylated by PKC at multiple sites of its cytoplasmic part. Phosphorylation dcreases activity at the cell surface, leading to diminished substrate cleavage. In terms of tissue distribution, isoform 1 is expressed in kidney, intestinal brush borders, and salivary ducts. Isoform 2 has been found in carcinoma cells.

The protein resides in the cell membrane. The protein localises to the secreted. It carries out the reaction Hydrolysis of proteins, including azocasein, and peptides. Hydrolysis of 5-His-|-Leu-6, 6-Leu-|-Cys-7, 14-Ala-|-Leu-15 and 19-Cys-|-Gly-20 bonds in insulin B chain.. Strongly inhibited by fetuin-A/AHSG. Inhibited by cysteine and by the metal ion chelators EDTA and 1,10-phenanthroline. Not inhibited by 3,4-dichloroisocourmarin, soybean trypsin inhibitor, or the cysteine proteinase inhibitors iodoacetic acid and E-64. Functionally, membrane metallopeptidase that sheds many membrane-bound proteins. Exhibits a strong preference for acidic amino acids at the P1' position. Known substrates include: FGF19, VGFA, IL1B, IL18, procollagen I and III, E-cadherin, KLK7, gastrin, ADAM10, tenascin-C. The presence of several pro-inflammatory cytokine among substrates implicate MEP1B in inflammation. It is also involved in tissue remodeling due to its capability to degrade extracellular matrix components. The chain is Meprin A subunit beta (Mep1b) from Mus musculus (Mouse).